Here is a 199-residue protein sequence, read N- to C-terminus: N-(5'-phosphoribosyl)anthranilate isomerase (199 aa).

This sequence belongs to the TrpF family.

It catalyses the reaction N-(5-phospho-beta-D-ribosyl)anthranilate = 1-(2-carboxyphenylamino)-1-deoxy-D-ribulose 5-phosphate. It functions in the pathway amino-acid biosynthesis; L-tryptophan biosynthesis; L-tryptophan from chorismate: step 3/5. This Campylobacter jejuni subsp. jejuni serotype O:2 (strain ATCC 700819 / NCTC 11168) protein is N-(5'-phosphoribosyl)anthranilate isomerase.